A 344-amino-acid chain; its full sequence is Photosystem II protein D1 (344 aa).

The residue at position 2 (Thr2) is an N-acetylthreonine. A Phosphothreonine modification is found at Thr2. 3 helical membrane passes run 29-46 (YIGWFGCLMIPTLLTATS), 118-133 (HFFLGICAYMGREWEL), and 142-156 (WIAVAYSAPVAAATA). Position 118 (His118) interacts with chlorophyll a. Tyr126 provides a ligand contact to pheophytin a. The [CaMn4O5] cluster site is built by Asp170 and Glu189. The chain crosses the membrane as a helical span at residues 197-218 (FHMLGVAGVFGGSLFSAMHGSL). Residue His198 coordinates chlorophyll a. Residues His215 and 264 to 265 (SF) each bind a quinone. His215 lines the Fe cation pocket. Position 272 (His272) interacts with Fe cation. Residues 274-288 (FLAAWPVIGIWFTAL) traverse the membrane as a helical segment. His332, Glu333, Asp342, and Ala344 together coordinate [CaMn4O5] cluster.

Belongs to the reaction center PufL/M/PsbA/D family. As to quaternary structure, PSII is composed of 1 copy each of membrane proteins PsbA, PsbB, PsbC, PsbD, PsbE, PsbF, PsbH, PsbI, PsbJ, PsbK, PsbL, PsbM, PsbT, PsbX, PsbY, PsbZ, Psb30/Ycf12, at least 3 peripheral proteins of the oxygen-evolving complex and a large number of cofactors. It forms dimeric complexes. It depends on The D1/D2 heterodimer binds P680, chlorophylls that are the primary electron donor of PSII, and subsequent electron acceptors. It shares a non-heme iron and each subunit binds pheophytin, quinone, additional chlorophylls, carotenoids and lipids. D1 provides most of the ligands for the Mn4-Ca-O5 cluster of the oxygen-evolving complex (OEC). There is also a Cl(-1) ion associated with D1 and D2, which is required for oxygen evolution. The PSII complex binds additional chlorophylls, carotenoids and specific lipids. as a cofactor. Tyr-161 forms a radical intermediate that is referred to as redox-active TyrZ, YZ or Y-Z.

The protein resides in the plastid. It localises to the chloroplast thylakoid membrane. It carries out the reaction 2 a plastoquinone + 4 hnu + 2 H2O = 2 a plastoquinol + O2. Its function is as follows. Photosystem II (PSII) is a light-driven water:plastoquinone oxidoreductase that uses light energy to abstract electrons from H(2)O, generating O(2) and a proton gradient subsequently used for ATP formation. It consists of a core antenna complex that captures photons, and an electron transfer chain that converts photonic excitation into a charge separation. The D1/D2 (PsbA/PsbD) reaction center heterodimer binds P680, the primary electron donor of PSII as well as several subsequent electron acceptors. This Pleurastrum terricola (Filamentous green alga) protein is Photosystem II protein D1.